A 281-amino-acid chain; its full sequence is LC-AMP precursor 3 (281 aa).

The first 19 residues, 1 to 19 (MKYTIIPFLLLVALTCATA), serve as a signal peptide directing secretion. The propeptide occupies 20 to 56 (RSIDGSEKEVQEIREETPSSNEDVPFSLSANEDEEAR). Residue Leu-74 is modified to Leucine amide. The propeptide occupies 75-89 (GREESLSANEDEEAR). Ser-114 bears the Serine amide mark. Residues 115 to 129 (GREESFSANEDEEER) constitute a propeptide that is removed on maturation. Residue Leu-147 is modified to Leucine amide. A propeptide spanning residues 148–162 (GREESISANEDEETR) is cleaved from the precursor. A Leucine amide modification is found at Leu-180. Residues 181–195 (GREESLSAIEDEEAR) constitute a propeptide that is removed on maturation. A Leucine amide modification is found at Leu-213. Positions 214–228 (GREESLSANEDEEAR) are excised as a propeptide. Leu-246 carries the leucine amide modification. Positions 247 to 261 (GREESLSANEDEEAR) are excised as a propeptide. Leu-279 carries the leucine amide modification.

In terms of tissue distribution, expressed by the venom gland.

Its subcellular location is the secreted. Antimicrobial peptide that acts by influencing bacterial cell membrane permeability at low concentrations and by directly disrupting structure-function at high concentrations. Shows activity against Gram-negative bacteria (S.typhimurium CGMCC 1.1174 (MIC=2.5 uM), E.coli CCTCC AB 2018675 (MIC=5 uM), S.dysenteriae CGMCC 1.1869 (MIC=2.5 uM), P.aeruginosa CGMCC 1.596 (MIC 5-10 uM), K.pneumoniae (MIC=10 uM), A.baumannii (MIC=5-10 uM)), and Gram-positive bacteria (S.aureus CMCC 26003 or MRSA ATCC 43300 (MIC=5 uM), and E.faecium (MIC=2.5-5 uM)). Inhibits biofilm formation of E.coli and S.aureus in a dose-dependent manner and disrupts established biofilms. Demonstrates minimal bacterial resistance, excellent stability, negligible mammalian cell toxicity, low hemolytic activity, and appropriate selectivity for both normal and tumor cells. When combined with traditional antibiotics, exhibits additive or synergistic therapeutic effects. In vivo, in a neutropenic mouse thigh infection model, exhibits a therapeutic effect in inhibiting bacterial proliferation. In Lycosa coelestis (Wolf spider), this protein is LC-AMP precursor 3.